Here is a 335-residue protein sequence, read N- to C-terminus: Glycerol-3-phosphate dehydrogenase [NAD(P)+] (335 aa).

Residues tryptophan 11, arginine 30, and lysine 106 each coordinate NADPH. Lysine 106, glycine 135, and serine 137 together coordinate sn-glycerol 3-phosphate. Alanine 139 is an NADPH binding site. The sn-glycerol 3-phosphate site is built by lysine 190, aspartate 243, serine 253, arginine 254, and asparagine 255. Lysine 190 (proton acceptor) is an active-site residue. Arginine 254 contacts NADPH. 2 residues coordinate NADPH: valine 278 and glutamate 280.

The protein belongs to the NAD-dependent glycerol-3-phosphate dehydrogenase family.

It is found in the cytoplasm. The catalysed reaction is sn-glycerol 3-phosphate + NAD(+) = dihydroxyacetone phosphate + NADH + H(+). It carries out the reaction sn-glycerol 3-phosphate + NADP(+) = dihydroxyacetone phosphate + NADPH + H(+). It functions in the pathway membrane lipid metabolism; glycerophospholipid metabolism. Functionally, catalyzes the reduction of the glycolytic intermediate dihydroxyacetone phosphate (DHAP) to sn-glycerol 3-phosphate (G3P), the key precursor for phospholipid synthesis. This chain is Glycerol-3-phosphate dehydrogenase [NAD(P)+], found in Paucimonas lemoignei (Pseudomonas lemoignei).